The following is a 910-amino-acid chain: MIKNLISAFSQGVGIQKKELPSTIILNKDDYKEANYYNYYRNLELNKPDEVLARRIAGLAPIAYQYYNVSSFDNNQFKIVDFSIDSKLNDTCLTCVWTQTYKNESKTPVEAVYRIPLSPLSTVSAFSVQFNGKTLHGKIKDSTKAQEKYDDAIASGGQAFLAEKSKDDDNYFNFKLGNIPPTESSITIHITMISEIGSHLNSLHYLLHRYCFPQSSNYNFSLSLSVNLSNSIKSIFFDGDKSHSLQYENKEKTKCIIQYKKSLGFNTQPNILIVFELDDLNKPQSFIEKLSINKEDIKNNPHSDSDSDSDDEENKKENEKSSYAIALNFFPKFESINKEDIYQKGEFIFLIDCSGSMSGNPIDSARRALEIIIRSLNEQCKFNIYCFGSGFNKAFQEGSRKYDDDSLAVVNRYVSNISANLGGTELLQPIKDILSKEIDPEYPRQIFILTDGAVSDRSKLIEFVSKESKTTRIFTYGIGSSVDVELVVGLSKACKGYYTLIRNSSDMETEVMKLLSIAFEPTLSNVSFDWSQLLDLSNGKSTTIIQSPTQIRPIFNNERMMVYATIELDNDISNNIENHGQPVIVTMNADGPLGDRLSYHVELDFKNYSQSNSIHTLAAFKRIQDLEEIERKSSKETEKLEIIKLGKKYNLVSKHTSLVVTSDSDSPTEDTMKVINILPNNSQHPIIVDRCHTFAVNFNSPLQYQQQQQQQQQNFNSGFAPPPPPMMSSGPPPPPGSSFGAPPPPPPGGAFPTSSISEKKSSSQSSSSYLPPTMSLSRKSSLSPSSPSKNYPSPKLSSPSLSYGSTQSESTPSNDPLISLLAKQKANGSWSKSSIQDQFSSAISKIPNELSAVEDVWATLLVISKIMKTFASQKSKWELSVQKSNKWVKQQLLKLNLSFDQFLELAKSNV.

The 132-residue stretch at 63 to 194 folds into the VIT domain; that stretch reads AYQYYNVSSF…SITIHITMIS (132 aa). A disordered region spans residues 297–318; that stretch reads IKNNPHSDSDSDSDDEENKKEN. One can recognise a VWFA domain in the interval 346-515; sequence EFIFLIDCSG…DMETEVMKLL (170 aa). Over residues 703-719 the composition is skewed to low complexity; the sequence is QYQQQQQQQQQNFNSGF. The disordered stretch occupies residues 703 to 815; sequence QYQQQQQQQQ…TQSESTPSND (113 aa). Over residues 720-749 the composition is skewed to pro residues; it reads APPPPPMMSSGPPPPPGSSFGAPPPPPPGG. Positions 750-802 are enriched in low complexity; the sequence is AFPTSSISEKKSSSQSSSSYLPPTMSLSRKSSLSPSSPSKNYPSPKLSSPSLS. The segment covering 803–815 has biased composition (polar residues); it reads YGSTQSESTPSND.

The chain is von Willebrand factor A domain-containing protein DDB_G0292740 from Dictyostelium discoideum (Social amoeba).